Here is a 185-residue protein sequence, read N- to C-terminus: Ribosome-recycling factor (185 aa).

This sequence belongs to the RRF family.

It is found in the cytoplasm. In terms of biological role, responsible for the release of ribosomes from messenger RNA at the termination of protein biosynthesis. May increase the efficiency of translation by recycling ribosomes from one round of translation to another. This is Ribosome-recycling factor from Roseiflexus castenholzii (strain DSM 13941 / HLO8).